Here is a 30-residue protein sequence, read N- to C-terminus: Peptidase 1 (30 aa).

It belongs to the peptidase C1 family.

The protein localises to the secreted. The enzyme catalyses Broad endopeptidase specificity.. Its function is as follows. Thiol protease that hydrolyzes proteins, with a preference for Phe or basic residues. This is Peptidase 1 (DERM1) from Dermatophagoides microceras (House dust mite).